A 92-amino-acid polypeptide reads, in one-letter code: UPF0223 protein SUB0967 (92 aa).

It belongs to the UPF0223 family.

This is UPF0223 protein SUB0967 from Streptococcus uberis (strain ATCC BAA-854 / 0140J).